A 250-amino-acid chain; its full sequence is Small ribosomal subunit protein uS2 (250 aa).

Belongs to the universal ribosomal protein uS2 family.

This Teredinibacter turnerae (strain ATCC 39867 / T7901) protein is Small ribosomal subunit protein uS2.